The following is a 458-amino-acid chain: Photosystem II CP43 reaction center protein (458 aa).

5 helical membrane passes run 54-78, 119-140, 163-185, 240-260, and 276-297; these read LFEV…PHLA, LRGP…KDKN, KAMF…RVIT, RPFN…LSYS, and WFNN…ASQA. Residue E352 coordinates [CaMn4O5] cluster. A helical membrane pass occupies residues 432–456; that stretch reads RARAAAAGFEKGIDRKTEPVLSMSD.

This sequence belongs to the PsbB/PsbC family. PsbC subfamily. As to quaternary structure, PSII is composed of 1 copy each of membrane proteins PsbA, PsbB, PsbC, PsbD, PsbE, PsbF, PsbH, PsbI, PsbJ, PsbK, PsbL, PsbM, PsbT, PsbX, PsbY, PsbZ, Psb30/Ycf12, peripheral proteins PsbO, CyanoQ (PsbQ), PsbU, PsbV and a large number of cofactors. It forms dimeric complexes. The cofactor is Binds multiple chlorophylls and provides some of the ligands for the Ca-4Mn-5O cluster of the oxygen-evolving complex. It may also provide a ligand for a Cl- that is required for oxygen evolution. PSII binds additional chlorophylls, carotenoids and specific lipids..

It localises to the cellular thylakoid membrane. Functionally, one of the components of the core complex of photosystem II (PSII). It binds chlorophyll and helps catalyze the primary light-induced photochemical processes of PSII. PSII is a light-driven water:plastoquinone oxidoreductase, using light energy to abstract electrons from H(2)O, generating O(2) and a proton gradient subsequently used for ATP formation. The chain is Photosystem II CP43 reaction center protein from Prochlorothrix hollandica.